The sequence spans 210 residues: Selenoprotein T2 (210 aa).

Positions 1-21 are cleaved as a signal peptide; it reads MAEYSQTGILTALLLFTVVTV. The cysteinyl-selenocysteine (Cys-Sec) cross-link spans 62–65; it reads CISU. Residue Sec65 is a non-standard amino acid, selenocysteine.

The protein belongs to the SelWTH family. Selenoprotein T subfamily. May contain a selenide-sulfide bond between Cys-62 and Sec-65. This bond is speculated to serve as redox-active pair. As to expression, widely expressed in the embryo.

The sequence is that of Selenoprotein T2 from Danio rerio (Zebrafish).